Here is a 102-residue protein sequence, read N- to C-terminus: Hypersensitivity to hygromycin-B protein 1 (102 aa).

Residues 1 to 17 (MSLSFLLFSPFLPPCFS) form the signal peptide. A helical transmembrane segment spans residues 18–38 (SISICLSVLSTVSFFFAFTIP). Topologically, residues 39 to 69 (HYVLRCGSVDEWHIHSSAEDFRTQRCVCAVK) are cytoplasmic. A helical membrane pass occupies residues 70–90 (LSASLLGCLLACASWSLLLEV). Residues 91-102 (SRIKWHVGTAYS) lie on the Extracellular side of the membrane.

The protein resides in the membrane. In terms of biological role, involved in vacuolar trafficking. The polypeptide is Hypersensitivity to hygromycin-B protein 1 (Saccharomyces cerevisiae (strain ATCC 204508 / S288c) (Baker's yeast)).